A 229-amino-acid chain; its full sequence is tRNA pseudouridine synthase B (229 aa).

The active-site Nucleophile is D52.

This sequence belongs to the pseudouridine synthase TruB family. Type 1 subfamily.

It carries out the reaction uridine(55) in tRNA = pseudouridine(55) in tRNA. Functionally, responsible for synthesis of pseudouridine from uracil-55 in the psi GC loop of transfer RNAs. In Flavobacterium johnsoniae (strain ATCC 17061 / DSM 2064 / JCM 8514 / BCRC 14874 / CCUG 350202 / NBRC 14942 / NCIMB 11054 / UW101) (Cytophaga johnsonae), this protein is tRNA pseudouridine synthase B.